The chain runs to 355 residues: Fructose-1,6-bisphosphatase class 1 (355 aa).

Mg(2+) is bound by residues E94, D116, L118, and D119. Residues 119–122 (DGSS), N211, and 263–265 (YLY) contribute to the substrate site. E283 provides a ligand contact to Mg(2+).

Belongs to the FBPase class 1 family. As to quaternary structure, homotetramer. Requires Mg(2+) as cofactor.

The protein resides in the cytoplasm. It catalyses the reaction beta-D-fructose 1,6-bisphosphate + H2O = beta-D-fructose 6-phosphate + phosphate. It participates in carbohydrate biosynthesis; Calvin cycle. The protein is Fructose-1,6-bisphosphatase class 1 of Rhodospirillum rubrum (strain ATCC 11170 / ATH 1.1.1 / DSM 467 / LMG 4362 / NCIMB 8255 / S1).